We begin with the raw amino-acid sequence, 392 residues long: Putative nickel insertion protein (392 aa).

Belongs to the LarC family.

This is Putative nickel insertion protein from Pelobacter propionicus (strain DSM 2379 / NBRC 103807 / OttBd1).